The primary structure comprises 323 residues: Chitin-binding lectin 1 (323 aa).

Residues M1–A22 form the signal peptide. 4 positions are modified to 4-hydroxyproline: P50, P51, P53, and P55. O-linked (Ara...) hydroxyproline glycans are attached at residues P50, P51, P53, and P55. Chitin-binding type-1 domains are found at residues Y58–G101 and E105–L149. Disulfide bonds link C61–C77, C70–C83, C76–C90, C95–C99, C108–C125, C117–C131, C124–C138, and C143–C147. S78, W80, W82, and Y89 together coordinate chitin. The tract at residues P150–Y210 is extensin-like. O-linked (Gal) serine glycosylation is present at S151. 10 consecutive repeat copies span residues S151 to P159, S160 to P164, S165 to P167, S168 to P172, S173 to P180, S181 to P185, S186 to P190, S191 to P192, S193 to P198, and S200 to P206. A 10 X approximate repeats of S-P-P-P-P region spans residues S151–P206. A 4-hydroxyproline mark is found at P152, P153, P154, P155, P156, P157, P158, and P159. 8 O-linked (Ara...) hydroxyproline glycosylation sites follow: P152, P153, P154, P155, P156, P157, P158, and P159. The disordered stretch occupies residues P154 to P203. O-linked (Gal) serine glycosylation is present at S160. A 4-hydroxyproline mark is found at P161, P162, P163, and P164. O-linked (Ara...) hydroxyproline glycans are attached at residues P161, P162, P163, and P164. The O-linked (Gal) serine glycan is linked to S165. 4-hydroxyproline occurs at positions 166 and 167. O-linked (Ara...) hydroxyproline glycans are attached at residues P166 and P167. S168 carries O-linked (Gal) serine glycosylation. A 4-hydroxyproline mark is found at P169, P170, P171, and P172. P169, P170, P171, and P172 each carry an O-linked (Ara...) hydroxyproline glycan. S173 carries O-linked (Gal) serine glycosylation. 4-hydroxyproline occurs at positions 174, 175, 176, 177, 178, 179, and 180. 7 O-linked (Ara...) hydroxyproline glycosylation sites follow: P174, P175, P176, P177, P178, P179, and P180. Residue S181 is glycosylated (O-linked (Gal) serine). 4 positions are modified to 4-hydroxyproline: P182, P183, P184, and P185. O-linked (Ara...) hydroxyproline glycans are attached at residues P182, P183, P184, and P185. Residue S186 is glycosylated (O-linked (Gal) serine). P187, P188, P189, and P190 each carry 4-hydroxyproline. Residues P187, P188, P189, and P190 are each glycosylated (O-linked (Ara...) hydroxyproline). Residue S191 is glycosylated (O-linked (Gal) serine). P192 carries the 4-hydroxyproline modification. P192 carries an O-linked (Ara...) hydroxyproline glycan. S193 is a glycosylation site (O-linked (Gal) serine). 5 positions are modified to 4-hydroxyproline: P194, P195, P196, P197, and P198. 5 O-linked (Ara...) hydroxyproline glycosylation sites follow: P194, P195, P196, P197, and P198. The O-linked (Gal) serine glycan is linked to S200. 4-hydroxyproline occurs at positions 201, 202, 203, 204, 205, 206, and 209. 7 O-linked (Ara...) hydroxyproline glycosylation sites follow: P201, P202, P203, P204, P205, P206, and P209. Chitin-binding type-1 domains follow at residues Y210–G253 and E257–T301. Cystine bridges form between C213/C229, C222/C235, C228/C242, C247/C251, C260/C277, C269/C283, C276/C290, and C295/C299. S230, W232, W234, and Y241 together coordinate chitin.

This sequence in the central section; belongs to the extensin family. As to quaternary structure, homodimer. In terms of processing, heavily glycosylated with beta-arabinose on hydroxyprolines and with alpha-galactose on serines of the extensin-like domain. As no other sugars could be detected in the native lectin, it is unlikely that the three putative N-glycosylation sites are actually glycosylated. The N-terminus is blocked. The N-terminal sequences proposed in PubMed:9022287 and PubMed:11056399 originate probably from truncated proteins.

This protein might function as a defense against chitin containing pathogens. Binds to several branched or linear N-acetyllactosamine-containing glycosphingolipids and also to lactosylceramide with sphingosine and non-hydroxy fatty acids. The polypeptide is Chitin-binding lectin 1 (Solanum tuberosum (Potato)).